The following is a 90-amino-acid chain: Phenol 2-monooxygenase, stimulatory component DmpM (90 aa).

Belongs to the TmoD/XamoD family. As to quaternary structure, active as a monomer. Formation of dimers inactivates the protein. The multicomponent enzyme phenol hydroxylase is formed by DmpL (P1 component), DmpM (P2 component), DmpN (P3 component), DmpO (P4 component) and DmpP (P5 component).

It catalyses the reaction phenol + NADH + O2 + H(+) = catechol + NAD(+) + H2O. It functions in the pathway aromatic compound metabolism; phenol degradation. Part of a multicomponent enzyme which catalyzes the degradation of phenol and some of its methylated derivatives. DmpM is a regulatory subunit that stimulates the phenol hydroxylase activity of the complex. The steady-state rate of phenol hydroxylase turnover is dependent on the DmpM concentration, with a maximum observed rate at about 1.5 DmpM per oxygenase monomer. Higher concentrations of DmpM inhibit phenol hydroxylase activity. May act by altering the redox potential of the oxygenase. Required for growth on phenol and for in vitro phenol hydroxylase activity. This chain is Phenol 2-monooxygenase, stimulatory component DmpM, found in Pseudomonas sp. (strain CF600).